A 170-amino-acid polypeptide reads, in one-letter code: Cytochrome b6-f complex subunit 4 (170 aa).

Helical transmembrane passes span leucine 36–valine 56, leucine 95–glutamate 115, and threonine 131–isoleucine 151.

It belongs to the cytochrome b family. PetD subfamily. As to quaternary structure, the 4 large subunits of the cytochrome b6-f complex are cytochrome b6, subunit IV (17 kDa polypeptide, petD), cytochrome f and the Rieske protein, while the 4 small subunits are petG, petL, petM and petN. The complex functions as a dimer.

Its subcellular location is the plastid. The protein resides in the chloroplast thylakoid membrane. In terms of biological role, component of the cytochrome b6-f complex, which mediates electron transfer between photosystem II (PSII) and photosystem I (PSI), cyclic electron flow around PSI, and state transitions. This is Cytochrome b6-f complex subunit 4 from Nymphaea alba (White water-lily).